A 516-amino-acid chain; its full sequence is Cytochrome P450 1A2 (516 aa).

A glycan (O-linked (GlcNAc) serine) is linked at S69. F226 is a binding site for substrate. C458 lines the heme pocket.

It belongs to the cytochrome P450 family. Interacts with PGRMC1; the interaction requires PGRMC1 homodimerization. Heme is required as a cofactor.

It is found in the endoplasmic reticulum membrane. The protein resides in the microsome membrane. The enzyme catalyses an organic molecule + reduced [NADPH--hemoprotein reductase] + O2 = an alcohol + oxidized [NADPH--hemoprotein reductase] + H2O + H(+). It catalyses the reaction 17beta-estradiol + reduced [NADPH--hemoprotein reductase] + O2 = 2-hydroxy-17beta-estradiol + oxidized [NADPH--hemoprotein reductase] + H2O + H(+). It carries out the reaction 17beta-estradiol + reduced [NADPH--hemoprotein reductase] + O2 = 4-hydroxy-17beta-estradiol + oxidized [NADPH--hemoprotein reductase] + H2O + H(+). The catalysed reaction is estrone + reduced [NADPH--hemoprotein reductase] + O2 = 2-hydroxyestrone + oxidized [NADPH--hemoprotein reductase] + H2O + H(+). The enzyme catalyses estrone + reduced [NADPH--hemoprotein reductase] + O2 = 4-hydroxyestrone + oxidized [NADPH--hemoprotein reductase] + H2O + H(+). It catalyses the reaction cholesterol + reduced [NADPH--hemoprotein reductase] + O2 = 25-hydroxycholesterol + oxidized [NADPH--hemoprotein reductase] + H2O + H(+). It carries out the reaction all-trans-retinol + reduced [NADPH--hemoprotein reductase] + O2 = all-trans-retinal + oxidized [NADPH--hemoprotein reductase] + 2 H2O + H(+). The catalysed reaction is all-trans-retinal + reduced [NADPH--hemoprotein reductase] + O2 = all-trans-retinoate + oxidized [NADPH--hemoprotein reductase] + H2O + 2 H(+). The enzyme catalyses (5Z,8Z,11Z,14Z)-eicosatetraenoate + reduced [NADPH--hemoprotein reductase] + O2 = (14R,15S)-epoxy-(5Z,8Z,11Z)-eicosatrienoate + oxidized [NADPH--hemoprotein reductase] + H2O + H(+). It catalyses the reaction (5Z,8Z,11Z,14Z)-eicosatetraenoate + reduced [NADPH--hemoprotein reductase] + O2 = (14S,15R)-epoxy-(5Z,8Z,11Z)-eicosatrienoate + oxidized [NADPH--hemoprotein reductase] + H2O + H(+). It carries out the reaction (5Z,8Z,11Z,14Z,17Z)-eicosapentaenoate + reduced [NADPH--hemoprotein reductase] + O2 = (17R,18S)-epoxy-(5Z,8Z,11Z,14Z)-eicosatetraenoate + oxidized [NADPH--hemoprotein reductase] + H2O + H(+). The catalysed reaction is (4Z,7Z,10Z,13Z,16Z,19Z)-docosahexaenoate + reduced [NADPH--hemoprotein reductase] + O2 = (19R,20S)-epoxy-(4Z,7Z,10Z,13Z,16Z)-docosapentaenoate + oxidized [NADPH--hemoprotein reductase] + H2O + H(+). The enzyme catalyses (5S)-hydroperoxy-(6E,8Z,11Z,14Z)-eicosatetraenoate = 5-oxo-(6E,8Z,11Z,14Z)-eicosatetraenoate + H2O. It catalyses the reaction (12S)-hydroperoxy-(5Z,8Z,10E,14Z)-eicosatetraenoate = 12-oxo-(5Z,8Z,10E,14Z)-eicosatetraenoate + H2O. It carries out the reaction (15S)-hydroperoxy-(5Z,8Z,11Z,13E)-eicosatetraenoate = 15-oxo-(5Z,8Z,11Z,13E)-eicosatetraenoate + H2O. The catalysed reaction is (13S)-hydroperoxy-(9Z,11E)-octadecadienoate = 13-oxo-(9Z,11E)-octadecadienoate + H2O. The enzyme catalyses (5Z,8Z,11Z,14Z)-eicosatetraenoate + reduced [NADPH--hemoprotein reductase] + O2 = 13-hydroxy-(5Z,8Z,11Z,14Z)-eicosatetraenoate + oxidized [NADPH--hemoprotein reductase] + H2O + H(+). It catalyses the reaction (5Z,8Z,11Z,14Z)-eicosatetraenoate + reduced [NADPH--hemoprotein reductase] + O2 = 19-hydroxy-(5Z,8Z,11Z,14Z)-eicosatetraenoate + oxidized [NADPH--hemoprotein reductase] + H2O + H(+). It carries out the reaction (9Z,12Z)-octadecadienoate + reduced [NADPH--hemoprotein reductase] + O2 = 11-hydroxy-(9Z,12Z)-octadecadienoate + oxidized [NADPH--hemoprotein reductase] + H2O + H(+). It functions in the pathway cofactor metabolism; retinol metabolism. It participates in steroid metabolism; cholesterol metabolism. Its pathway is lipid metabolism; arachidonate metabolism. A cytochrome P450 monooxygenase involved in the metabolism of various endogenous substrates, including fatty acids, steroid hormones and vitamins. Mechanistically, uses molecular oxygen inserting one oxygen atom into a substrate, and reducing the second into a water molecule, with two electrons provided by NADPH via cytochrome P450 reductase (NADPH--hemoprotein reductase). Catalyzes the hydroxylation of carbon-hydrogen bonds. Exhibits high catalytic activity for the formation of hydroxyestrogens from estrone (E1) and 17beta-estradiol (E2), namely 2-hydroxy E1 and E2. Metabolizes cholesterol toward 25-hydroxycholesterol, a physiological regulator of cellular cholesterol homeostasis. May act as a major enzyme for all-trans retinoic acid biosynthesis in the liver. Catalyzes two successive oxidative transformation of all-trans retinol to all-trans retinal and then to the active form all-trans retinoic acid. Primarily catalyzes stereoselective epoxidation of the last double bond of polyunsaturated fatty acids (PUFA), displaying a strong preference for the (R,S) stereoisomer. Catalyzes bisallylic hydroxylation and omega-1 hydroxylation of PUFA. May also participate in eicosanoids metabolism by converting hydroperoxide species into oxo metabolites (lipoxygenase-like reaction, NADPH-independent). Plays a role in the oxidative metabolism of xenobiotics. Catalyzes the N-hydroxylation of heterocyclic amines and the O-deethylation of phenacetin. Metabolizes caffeine via N3-demethylation. The chain is Cytochrome P450 1A2 (CYP1A2) from Callithrix jacchus (White-tufted-ear marmoset).